The sequence spans 506 residues: Glycerol kinase (506 aa).

T14 contributes to the ADP binding site. Residues T14, T15, and S16 each contribute to the ATP site. T14 serves as a coordination point for sn-glycerol 3-phosphate. Position 18 (R18) interacts with ADP. Residues R84, E85, and Y136 each coordinate sn-glycerol 3-phosphate. Glycerol contacts are provided by R84, E85, and Y136. Phosphohistidine; by HPr is present on H232. D246 is a sn-glycerol 3-phosphate binding site. Glycerol-binding residues include D246 and Q247. 2 residues coordinate ADP: T268 and G311. The ATP site is built by T268, G311, Q315, and G412. ADP contacts are provided by G412 and N416.

Belongs to the FGGY kinase family. As to quaternary structure, homotetramer and homodimer (in equilibrium). In terms of processing, the phosphoenolpyruvate-dependent sugar phosphotransferase system (PTS), including enzyme I, and histidine-containing protein (HPr) are required for the phosphorylation of His-232, which leads to the activation of the enzyme.

The catalysed reaction is glycerol + ATP = sn-glycerol 3-phosphate + ADP + H(+). It participates in polyol metabolism; glycerol degradation via glycerol kinase pathway; sn-glycerol 3-phosphate from glycerol: step 1/1. Its activity is regulated as follows. Activated by phosphorylation and inhibited by fructose 1,6-bisphosphate (FBP). Functionally, key enzyme in the regulation of glycerol uptake and metabolism. Catalyzes the phosphorylation of glycerol to yield sn-glycerol 3-phosphate. The protein is Glycerol kinase of Enterococcus casseliflavus (Enterococcus flavescens).